A 309-amino-acid chain; its full sequence is Ribosomal RNA small subunit methyltransferase H (309 aa).

S-adenosyl-L-methionine is bound by residues A32–H34, D52, F79, D100, and Q107.

Belongs to the methyltransferase superfamily. RsmH family.

It is found in the cytoplasm. It carries out the reaction cytidine(1402) in 16S rRNA + S-adenosyl-L-methionine = N(4)-methylcytidine(1402) in 16S rRNA + S-adenosyl-L-homocysteine + H(+). Its function is as follows. Specifically methylates the N4 position of cytidine in position 1402 (C1402) of 16S rRNA. The polypeptide is Ribosomal RNA small subunit methyltransferase H (Mycoplasma capricolum subsp. capricolum (strain California kid / ATCC 27343 / NCTC 10154)).